Consider the following 852-residue polypeptide: Aconitate hydratase B (852 aa).

Substrate is bound by residues arginine 194, 237 to 239, 405 to 407, and serine 489; these read SSR and QDT. 3 residues coordinate [4Fe-4S] cluster: cysteine 708, cysteine 766, and cysteine 769. Positions 788 and 793 each coordinate substrate.

The protein belongs to the aconitase/IPM isomerase family. In terms of assembly, monomer. [4Fe-4S] cluster serves as cofactor.

The enzyme catalyses citrate = D-threo-isocitrate. The catalysed reaction is (2S,3R)-3-hydroxybutane-1,2,3-tricarboxylate = 2-methyl-cis-aconitate + H2O. It functions in the pathway carbohydrate metabolism; tricarboxylic acid cycle; isocitrate from oxaloacetate: step 2/2. The protein operates within organic acid metabolism; propanoate degradation. Its function is as follows. Involved in the catabolism of short chain fatty acids (SCFA) via the tricarboxylic acid (TCA)(acetyl degradation route) and probably via the 2-methylcitrate cycle I (propionate degradation route). Catalyzes the reversible isomerization of citrate to isocitrate via cis-aconitate. Catalyzes the hydration of 2-methyl-cis-aconitate to yield (2R,3S)-2-methylisocitrate. The apo form of AcnB functions as a RNA-binding regulatory protein. In Helicobacter pylori (strain J99 / ATCC 700824) (Campylobacter pylori J99), this protein is Aconitate hydratase B (acnB).